The following is a 73-amino-acid chain: Maltose-binding periplasmic protein (73 aa).

The first 30 residues, 1–30 (MMTKTNLKMGARTLALSVLATLVLSASALA), serve as a signal peptide directing secretion.

The protein belongs to the bacterial solute-binding protein 1 family.

Its subcellular location is the periplasm. Functionally, involved in the high-affinity maltose membrane transport system. Initial receptor for the active transport of and chemotaxis toward maltooligosaccharides. The chain is Maltose-binding periplasmic protein (malE) from Photorhabdus luminescens (Xenorhabdus luminescens).